Reading from the N-terminus, the 246-residue chain is tRNA1(Val) (adenine(37)-N6)-methyltransferase (246 aa).

The protein belongs to the methyltransferase superfamily. tRNA (adenine-N(6)-)-methyltransferase family.

The protein localises to the cytoplasm. It catalyses the reaction adenosine(37) in tRNA1(Val) + S-adenosyl-L-methionine = N(6)-methyladenosine(37) in tRNA1(Val) + S-adenosyl-L-homocysteine + H(+). Its function is as follows. Specifically methylates the adenine in position 37 of tRNA(1)(Val) (anticodon cmo5UAC). In Shewanella halifaxensis (strain HAW-EB4), this protein is tRNA1(Val) (adenine(37)-N6)-methyltransferase.